Here is a 459-residue protein sequence, read N- to C-terminus: Periodic tryptophan protein 1 homolog (459 aa).

The segment at 44–84 (GDTQQELDEESDDDAEEGENAEEDQNDMDVDDHADANSENR) is disordered. Over residues 48–73 (QELDEESDDDAEEGENAEEDQNDMDV) the composition is skewed to acidic residues. Positions 74-84 (DDHADANSENR) are enriched in basic and acidic residues. WD repeat units follow at residues 168–214 (LLPS…AIEP), 232–272 (GHKD…PHTT), 275–315 (AFGK…GVNS), 321–361 (KVDG…QLLW), and 365–405 (AHNE…AKHV). The residue at position 385 (Ser-385) is a Phosphoserine.

This sequence belongs to the WD repeat PWP1 family. As to quaternary structure, interacts with Mybbp1A. In terms of processing, phosphorylated in response to nutrient-activated TORC1 signaling. As to expression, detected in the germline of adult testis and ovary (at protein level). Detected in ovary somatic cells, in zfh1-positive cyst cells in the testis and absent in differentiated cyst cells (at protein level).

It is found in the nucleus. The protein localises to the nucleolus. Its subcellular location is the chromosome. It localises to the nucleoplasm. Chromatin-associated factor that regulates transcription. Regulates Pol I-mediated rRNA biogenesis and, probably, Pol III-mediated transcription. Regulates the localization to the nucleolus of Cdk7, a regulator of the Pol I-elongation factor TFIIH. Acts as a regulator of cell proliferation and tissue growth as part of the TORC1 and Myc signaling pathway in response to nutrients. Required in males for both germline stem cell (GSC) maintenance and early stages of germ cell differentiation of germ cell cysts. Not required for female germline stem cell (GSC) maintenance, but necessary to regulate germ cell differentiation and egg chamber development. In female somatic cells, required for follicle stem cell survival and maintenance. The chain is Periodic tryptophan protein 1 homolog from Drosophila melanogaster (Fruit fly).